A 90-amino-acid chain; its full sequence is MGEQSFVVRVWGLVQGVGFRYFTRERALQLGLRGHAYNLEDGSVEILICGPEQSVQMMLGWLERGPRTAEVTRMEYEVAPPPKGSGFHTN.

The Acylphosphatase-like domain maps to 5-90 (SFVVRVWGLV…PPKGSGFHTN (86 aa)). Catalysis depends on residues Arg20 and Asn38.

It belongs to the acylphosphatase family.

It carries out the reaction an acyl phosphate + H2O = a carboxylate + phosphate + H(+). The protein is Acylphosphatase (acyP) of Aeromonas hydrophila subsp. hydrophila (strain ATCC 7966 / DSM 30187 / BCRC 13018 / CCUG 14551 / JCM 1027 / KCTC 2358 / NCIMB 9240 / NCTC 8049).